The chain runs to 1266 residues: Intermembrane phospholipid transporter YhdP (1266 aa).

Over 1-5 (MRRLP) the chain is Cytoplasmic. A helical membrane pass occupies residues 6–26 (GILLLTGAALVVIAALLVSGL). At 27 to 1266 (RIALPHLDAW…LRQPRKEKAQ (1240 aa)) the chain is on the periplasmic side. The interval 94-103 (VWQSLLHMRW) is P-helix. Positions 1121-1144 (HAGQLLRLLSVDALMRKLRFDFRD) are C-helix_2. Residues 1203–1237 (ISATVGVAAAFAVNPIVGAAVFAASKVLGPLWSKV) are C-helix_1.

The protein resides in the cell inner membrane. Functionally, involved in outer membrane lipid homeostasis. Likely transports phospholipids between the inner membrane and the outer membrane. It would provide a bridge-like structure that protects phospholipids as they travel across the periplasm. The phosphate-containing molecules are captured along the length of a hydrophobic groove that is continuous along all but the extreme N-terminus of the protein. It also appears to control, directly or indirectly, levels of cyclic enterobacterial common antigen (cyclic ECA), a soluble cyclic ECA molecule present in the periplasm. TamB, YdbH and YhdP are redundant, but not equivalent, in performing an essential function for growth and maintaining lipid homeostasis in the outer membrane. The transport functions of TamB and YhdP could be differentiated according to the fatty acid saturation state of the phospholipids, with TamB transporting more unsaturated phospholipids and YhdP more saturated phospholipids. Any of these three proteins is sufficient for growth. The chain is Intermembrane phospholipid transporter YhdP (yhdP) from Escherichia coli (strain K12).